Here is a 348-residue protein sequence, read N- to C-terminus: Phosphate acyltransferase (348 aa).

The protein belongs to the PlsX family. As to quaternary structure, homodimer. Probably interacts with PlsY.

It is found in the cytoplasm. It catalyses the reaction a fatty acyl-[ACP] + phosphate = an acyl phosphate + holo-[ACP]. It functions in the pathway lipid metabolism; phospholipid metabolism. In terms of biological role, catalyzes the reversible formation of acyl-phosphate (acyl-PO(4)) from acyl-[acyl-carrier-protein] (acyl-ACP). This enzyme utilizes acyl-ACP as fatty acyl donor, but not acyl-CoA. The chain is Phosphate acyltransferase from Nitrosomonas europaea (strain ATCC 19718 / CIP 103999 / KCTC 2705 / NBRC 14298).